The primary structure comprises 304 residues: uncharacterized protein (304 aa).

The first 25 residues, 1–25 (MVKTAMLGAVALVIALGGTCGVADA), serve as a signal peptide directing secretion. The GP-PDE domain maps to 34 to 303 (PMIVAHRAGT…DSPLAAQQWR (270 aa)).

This is an uncharacterized protein from Mycobacterium tuberculosis (strain CDC 1551 / Oshkosh).